Consider the following 234-residue polypeptide: DNA repair and recombination protein RadB (234 aa).

It belongs to the eukaryotic RecA-like protein family. RadB subfamily.

In terms of biological role, involved in DNA repair and in homologous recombination. May regulate the cleavage reactions of the branch-structured DNA. Has a very weak ATPase activity that is not stimulated by DNA. Binds DNA but does not promote DNA strands exchange. The chain is DNA repair and recombination protein RadB from Methanobrevibacter smithii (strain ATCC 35061 / DSM 861 / OCM 144 / PS).